We begin with the raw amino-acid sequence, 257 residues long: UPF0246 protein swp_3736 (257 aa).

It belongs to the UPF0246 family.

In Shewanella piezotolerans (strain WP3 / JCM 13877), this protein is UPF0246 protein swp_3736.